The sequence spans 112 residues: Carboxysome shell protein CcmK4 (112 aa).

In terms of domain architecture, BMC spans 6 to 92 (AVGSIETIGF…PHENVVAVLP (87 aa)).

It belongs to the bacterial microcompartments protein family. CcmK subfamily. In terms of assembly, homohexamer. Interacts with full-length CcmM. Forms mixed heterohexamers with CcmK3, probably with 1:5 CcmK3:CcmK4 stoichiometry. Only very weak interactions with CcmK1 and CcmK2 were seen.

It localises to the carboxysome. Its function is as follows. A probably minor shell protein component of the carboxysome, a polyhedral inclusion where RuBisCO (ribulose bisphosphate carboxylase, rbcL-rbcS) is sequestered. The central pore probably regulates metabolite flux, as might the gaps between assembled homohexamers. Homohexamers make sheets that probably form the facets of the polyhedral carboxysome. This subunit probably makes both homohexamers and heterohexamers with CcmK3. This is Carboxysome shell protein CcmK4 from Synechocystis sp. (strain ATCC 27184 / PCC 6803 / Kazusa).